Here is a 77-residue protein sequence, read N- to C-terminus: Acyl carrier protein (77 aa).

In terms of domain architecture, Carrier spans 2–77 (SSIDKRIKEI…DAIDYITDHT (76 aa)). S37 is modified (O-(pantetheine 4'-phosphoryl)serine).

Belongs to the acyl carrier protein (ACP) family. In terms of processing, 4'-phosphopantetheine is transferred from CoA to a specific serine of apo-ACP by AcpS. This modification is essential for activity because fatty acids are bound in thioester linkage to the sulfhydryl of the prosthetic group.

The protein localises to the cytoplasm. It participates in lipid metabolism; fatty acid biosynthesis. Its function is as follows. Carrier of the growing fatty acid chain in fatty acid biosynthesis. In Geotalea uraniireducens (strain Rf4) (Geobacter uraniireducens), this protein is Acyl carrier protein.